A 475-amino-acid polypeptide reads, in one-letter code: BTB/POZ domain-containing protein 10 (475 aa).

The segment at 1-144 (MAGRPHPYDS…SQSSSDGSCK (144 aa)) is disordered. A compositionally biased stretch (basic residues) spans 22–31 (LHSRPRKLYK). The segment covering 57 to 80 (GHERSRDRRRSSDRSRDSSHERAE) has biased composition (basic and acidic residues). Residues 81–94 (SQLTPCIRNVTSPT) show a composition bias toward polar residues. The segment covering 97-107 (HHIEREKDHSS) has biased composition (basic and acidic residues). The span at 108 to 144 (SRPSSPRPQRASPNGSMSSAGNSSRNSSQSSSDGSCK) shows a compositional bias: low complexity. Residues 146–475 (SGEMVFVYEN…LDPDAQNPML (330 aa)) are interaction with AKT family members. A BTB domain is found at 167–241 (ERVTLIVDNT…YKTGIIRCPD (75 aa)). The disordered stretch occupies residues 451–475 (ELDILPSHPASGNNDLDPDAQNPML).

As to quaternary structure, interacts (via C-terminal 330-amino-acid region) with AKT1; AKT2 and AKT3. Interacts with PPP2CA and PPP1CA. Ubiquitously expressed (at protein level).

It is found in the nucleus. The protein localises to the cytoplasm. In terms of biological role, plays a major role as an activator of AKT family members by inhibiting PPP2CA-mediated dephosphorylation, thereby keeping AKTs activated. Plays a role in preventing motor neuronal death and in accelerating the growth of pancreatic beta cells. The sequence is that of BTB/POZ domain-containing protein 10 (Btbd10) from Mus musculus (Mouse).